The sequence spans 352 residues: Mitochondrial ubiquitin ligase activator of NFKB 1 (352 aa).

Residues 1 to 8 lie on the Cytoplasmic side of the membrane; it reads MESGSRPS. Residues 9–29 form a helical membrane-spanning segment; it reads LGQVILLGTSSMVTAVLYSIY. At 30–238 the chain is on the mitochondrial intermembrane side; the sequence is RQKAQVAQEL…LLHRQESSVR (209 aa). Residue K52 forms a Glycyl lysine isopeptide (Lys-Gly) (interchain with G-Cter in ubiquitin) linkage. The helical transmembrane segment at 239 to 259 threads the bilayer; the sequence is LWKILVLVFGFATCATLFFIL. At 260–352 the chain is on the cytoplasmic side; the sequence is RKQYLHRQER…ITRVIPLYNS (93 aa). A Glycyl lysine isopeptide (Lys-Gly) (interchain with G-Cter in ubiquitin) cross-link involves residue K299. The RING-type zinc-finger motif lies at 302 to 340; the sequence is CVVCLSNFKSCVFLECGHVCSCRQCYLALPEPKRCPICR.

As to quaternary structure, homooligomer. Interacts with MAP3K7/TAK1. Interacts with UBC9. Interacts with and sumoylates DNM1L. Interacts with MAVS. Interacts with TP53 (via N-terminus); the interaction leads to ubiquitination and proteasomal degradation of TP53. In terms of processing, ubiquitinated by PRKN during mitophagy, leading to its degradation and enhancement of mitophagy. Deubiquitinated by USP30. Expressed in cortical neurons (at protein level).

It localises to the mitochondrion outer membrane. It is found in the peroxisome. The enzyme catalyses S-ubiquitinyl-[E2 ubiquitin-conjugating enzyme]-L-cysteine + [acceptor protein]-L-lysine = [E2 ubiquitin-conjugating enzyme]-L-cysteine + N(6)-ubiquitinyl-[acceptor protein]-L-lysine.. The protein operates within protein modification; protein ubiquitination. It participates in protein modification; protein sumoylation. Functionally, exhibits weak E3 ubiquitin-protein ligase activity. E3 ubiquitin ligases accept ubiquitin from an E2 ubiquitin-conjugating enzyme in the form of a thioester and then directly transfer the ubiquitin to targeted substrates. Can ubiquitinate AKT1 preferentially at 'Lys-284' involving 'Lys-48'-linked polyubiquitination and seems to be involved in regulation of Akt signaling by targeting phosphorylated Akt to proteasomal degradation. Mediates polyubiquitination of cytoplasmic TP53 at 'Lys-27' which targets TP53 for proteasomal degradation, thus reducing TP53 levels in the cytoplasm and mitochondrion. Proposed to preferentially act as a SUMO E3 ligase at physiological concentrations. Plays a role in the control of mitochondrial morphology by promoting mitochondrial fragmentation, and influences mitochondrial localization. Likely to promote mitochondrial fission through negatively regulating the mitochondrial fusion proteins MFN1 and MFN2, acting in a pathway that is parallel to the PRKN/PINK1 regulatory pathway. May also be involved in the sumoylation of the membrane fission protein DNM1L. Inhibits cell growth. When overexpressed, activates JNK through MAP3K7/TAK1 and induces caspase-dependent apoptosis. Involved in the modulation of innate immune defense against viruses by inhibiting RIGI-dependent antiviral response. Can mediate RIGI sumoylation and disrupt its polyubiquitination. The chain is Mitochondrial ubiquitin ligase activator of NFKB 1 (Mul1) from Mus musculus (Mouse).